The sequence spans 749 residues: Formate acetyltransferase (749 aa).

The region spanning 3–619 is the PFL domain; the sequence is ETNKNHATAW…KTGNTPDGRK (617 aa). C413 acts as the S-acetylcysteine intermediate in catalysis. The Cysteine radical intermediate role is filled by C414. Residues 626–749 enclose the Glycine radical domain; the sequence is PGANPMHGRD…VISRTFHESM (124 aa). At G724 the chain carries Glycine radical.

The protein belongs to the glycyl radical enzyme (GRE) family. PFL subfamily. As to quaternary structure, homodimer.

The protein localises to the cytoplasm. It carries out the reaction formate + acetyl-CoA = pyruvate + CoA. It functions in the pathway fermentation; pyruvate fermentation; formate from pyruvate: step 1/1. In terms of biological role, catalyzes the conversion of pyruvate to formate and acetyl-CoA. The protein is Formate acetyltransferase (pflB) of Staphylococcus aureus (strain USA300).